A 797-amino-acid chain; its full sequence is Protein tamozhennic (797 aa).

Residues Gln-79–Gly-146 form the PUB domain. 2 disordered regions span residues Ala-515 to Leu-570 and Leu-638 to Val-697. Positions Glu-662–Lys-679 are enriched in basic and acidic residues. The segment at Ile-735–Asp-766 adopts a RanBP2-type zinc-finger fold.

In terms of assembly, homomultimer. Binds to dl and msl-1 via their nuclear localization signal (NLS). Also binds to Ran, Ran-like and mbo.

It is found in the cytoplasm. Functionally, has an essential role during oogenesis and embryogenesis, perhaps in modulating the levels of nuclear import of additional proteins. Modulates the nuclear import of dorsal (dl), Dif and male specific lethal 1 (msl-1). Negatively regulates nuclear import of dl and controls the accumulation of dl in the nucleus after immune challenge. This is Protein tamozhennic (tamo) from Drosophila melanogaster (Fruit fly).